We begin with the raw amino-acid sequence, 397 residues long: GDP-mannose transporter 1 (397 aa).

The segment at 1–57 (MSKPFVPTPNISRPATPSSLDYGKDEASSTLLRDMGERGDRERKDREERDKKEAMPS) is disordered. Residues 1 to 61 (MSKPFVPTPN…KEAMPSGQDQ (61 aa)) are Cytoplasmic-facing. Over residues 9–19 (PNISRPATPSS) the composition is skewed to polar residues. Residues 34–54 (DMGERGDRERKDREERDKKEA) show a composition bias toward basic and acidic residues. A helical transmembrane segment spans residues 62-82 (VLPILSYCAASIMMTVVNKYV). Topologically, residues 83–87 (VSGAN) are lumenal. Asn-87 is a glycosylation site (N-linked (GlcNAc...) asparagine). A helical membrane pass occupies residues 88–108 (FTMTFLLLAIQSSVCVLAVTT). The Cytoplasmic portion of the chain corresponds to 109-124 (VKKLGFISFRDFDKND). A helical membrane pass occupies residues 125-142 (AKAWWPISTLLVAVIYTG). Residues 143-145 (SKA) are Lumenal-facing. The chain crosses the membrane as a helical span at residues 146 to 168 (LQFLSIPVYTIFKNLTIILIAYG). Topologically, residues 169–174 (EVFMFN) are cytoplasmic. The helical transmembrane segment at 175-197 (GAVSGLTLCSFALMVGSSIIAAW) threads the bilayer. At 198-228 (SDITSVWNKEPELDPITGLEITVGPVSTIGG) the chain is on the lumenal side. Residues 229–249 (LNAGYIWMALNCFVSAAYVLF) form a helical membrane-spanning segment. Residues 250-272 (MRKRIKVTGFKDWDSMYYNNLLS) lie on the Cytoplasmic side of the membrane. A helical membrane pass occupies residues 273–293 (IPILVVFSLVIEDWGSESLAL). Residues 294–300 (NFPASNR) are Lumenal-facing. The chain crosses the membrane as a helical span at residues 301–321 (VLLLSAMAFSGAAAVFISYST). Residues 322 to 332 (AWCVRITGSTT) lie on the Cytoplasmic side of the membrane. A helical membrane pass occupies residues 333-353 (YSMVGALNKLPVAASGILFFG). At 354-355 (DP) the chain is on the lumenal side. Residues 356–376 (ANFGNISAIAVGGVAGVVYAV) form a helical membrane-spanning segment. The Cytoplasmic segment spans residues 377–397 (AKTNQAKVEKARQARAAGGRP).

Belongs to the TPT transporter family. SLC35D subfamily. In terms of assembly, homooligomer.

It is found in the golgi apparatus membrane. It localises to the cytoplasmic vesicle membrane. The protein localises to the endoplasmic reticulum membrane. In terms of biological role, involved in the import of GDP-mannose from the cytoplasm into the Golgi lumen. Involved in capsule synthesis. In Cryptococcus neoformans var. neoformans serotype D (strain B-3501A) (Filobasidiella neoformans), this protein is GDP-mannose transporter 1 (GMT1).